Consider the following 155-residue polypeptide: Transcriptional repressor NrdR (155 aa).

A zinc finger lies at 3–34 (CPFCHAEETKVVDSRLVADGAQVRRRRECLEC). An ATP-cone domain is found at 49–139 (PLIIKRDGRR…VYKRFKDVSD (91 aa)).

Belongs to the NrdR family. Requires Zn(2+) as cofactor.

Functionally, negatively regulates transcription of bacterial ribonucleotide reductase nrd genes and operons by binding to NrdR-boxes. The chain is Transcriptional repressor NrdR from Legionella pneumophila (strain Paris).